We begin with the raw amino-acid sequence, 375 residues long: Queuine tRNA-ribosyltransferase (375 aa).

The active-site Proton acceptor is the aspartate 89. Residues 89 to 93 (DSGGF), aspartate 143, glutamine 187, and glycine 214 each bind substrate. The RNA binding stretch occupies residues 245–251 (GVGKPED). The active-site Nucleophile is aspartate 264. The segment at 269-273 (TRNAR) is RNA binding; important for wobble base 34 recognition. Cysteine 302, cysteine 304, cysteine 307, and histidine 333 together coordinate Zn(2+).

The protein belongs to the queuine tRNA-ribosyltransferase family. Homodimer. Within each dimer, one monomer is responsible for RNA recognition and catalysis, while the other monomer binds to the replacement base PreQ1. Zn(2+) serves as cofactor.

The catalysed reaction is 7-aminomethyl-7-carbaguanine + guanosine(34) in tRNA = 7-aminomethyl-7-carbaguanosine(34) in tRNA + guanine. The protein operates within tRNA modification; tRNA-queuosine biosynthesis. Catalyzes the base-exchange of a guanine (G) residue with the queuine precursor 7-aminomethyl-7-deazaguanine (PreQ1) at position 34 (anticodon wobble position) in tRNAs with GU(N) anticodons (tRNA-Asp, -Asn, -His and -Tyr). Catalysis occurs through a double-displacement mechanism. The nucleophile active site attacks the C1' of nucleotide 34 to detach the guanine base from the RNA, forming a covalent enzyme-RNA intermediate. The proton acceptor active site deprotonates the incoming PreQ1, allowing a nucleophilic attack on the C1' of the ribose to form the product. After dissociation, two additional enzymatic reactions on the tRNA convert PreQ1 to queuine (Q), resulting in the hypermodified nucleoside queuosine (7-(((4,5-cis-dihydroxy-2-cyclopenten-1-yl)amino)methyl)-7-deazaguanosine). This Salmonella paratyphi A (strain ATCC 9150 / SARB42) protein is Queuine tRNA-ribosyltransferase.